The following is a 443-amino-acid chain: L-seryl-tRNA(Sec) selenium transferase (443 aa).

K285 carries the post-translational modification N6-(pyridoxal phosphate)lysine.

Belongs to the SelA family. The cofactor is pyridoxal 5'-phosphate.

Its subcellular location is the cytoplasm. It catalyses the reaction L-seryl-tRNA(Sec) + selenophosphate + H(+) = L-selenocysteinyl-tRNA(Sec) + phosphate. It participates in aminoacyl-tRNA biosynthesis; selenocysteinyl-tRNA(Sec) biosynthesis; selenocysteinyl-tRNA(Sec) from L-seryl-tRNA(Sec) (bacterial route): step 1/1. Converts seryl-tRNA(Sec) to selenocysteinyl-tRNA(Sec) required for selenoprotein biosynthesis. This is L-seryl-tRNA(Sec) selenium transferase from Campylobacter lari (strain RM2100 / D67 / ATCC BAA-1060).